We begin with the raw amino-acid sequence, 496 residues long: Fizzy-related protein homolog (496 aa).

Disordered regions lie at residues 28–51 (RRTLTPASSPVSSPSKHGDRFIPS), 64–88 (INENEKSPSQNRKAKDATSDNGKDG), and 105–166 (EKVQ…SPRK). Thr32 carries the post-translational modification Phosphothreonine. A compositionally biased stretch (polar residues) spans 32-42 (TPASSPVSSPS). At Ser36 the chain carries Phosphoserine. Residues 47 to 52 (RFIPSR) are involved in APC/FZR1 E3 ubiquitin-protein ligase complex activity. An N6-acetyllysine modification is found at Lys69. Composition is skewed to basic and acidic residues over residues 76–86 (KAKDATSDNGK) and 106–126 (KVQDPQTEDRRLQPSTPEKKG). Residues Ser133, Ser138, Ser146, and Ser151 each carry the phosphoserine modification. The segment covering 146-160 (SPYSLSPVSNKSQKL) has biased composition (polar residues). Lys159 bears the N6-acetyllysine mark. WD repeat units follow at residues 182 to 222 (PELQ…VTRL), 227 to 266 (VEGDSVTSVGWSERGNLVAVGTHKGFVQIWDAAAGKKLSM), 269 to 306 (GHTARVGALAWNAEQLSSGSRDRMILQRDIRTPPLQSE), 311 to 350 (GHRQEVCGLKWSTDHQLLASGGNDNKLLVWNHSSLSPVQQ), 353 to 395 (EHLA…PLQC), 397 to 438 (DTGS…QVAK), and 441 to 480 (GHSYRVLYLAMSPDGEAIVTGAGDETLRFWNVFSKTRSTK).

It belongs to the WD repeat CDC20/Fizzy family. The unphosphorylated form interacts with APC/C during mitosis. Interacts with NINL. Interacts (in complex with the anaphase promoting complex APC) with MAD2L2; inhibits FZR1-mediated APC/C activation. Interacts with SIRT2 and USP37. Interacts (via WD repeats) with MAK. Interacts with RBBP8/CtIP; this interaction leads to RBBP8 proteasomal degradation. Interacts with HECW2. Interacts with SASS6; the interaction is regulated by CENATAC and leads to SASS6 proteasomal degradation. Interacts (via N-terminus) with CCNF. Interacts with CDC6. Interacts with TK1 (via the KEN box). Acetylated. Deacetylated by SIRT2 at Lys-69 and Lys-159; deacetylation enhances the interaction of FZR1 with CDC27, leading to activation of anaphase promoting complex/cyclosome (APC/C). Post-translationally, following DNA damage, it is dephosphorylated by CDC14B in G2 phase, leading to its reassociation with the APC/C, and allowing an efficient G2 DNA damage checkpoint. Phosphorylated by MAK. In terms of processing, ubiquitinated by the SCF(CCNF) E3 ubiquitin-protein ligase complex; leading to its degradation by the proteasome. In terms of tissue distribution, isoform 2 is expressed at high levels in heart, liver, spleen and some cancer cell lines whereas isoform 3 is expressed only at low levels in these tissues.

It localises to the nucleus. The protein localises to the cytoplasm. It functions in the pathway protein modification; protein ubiquitination. Its function is as follows. Substrate-specific adapter for the anaphase promoting complex/cyclosome (APC/C) E3 ubiquitin-protein ligase complex. Associates with the APC/C in late mitosis, in replacement of CDC20, and activates the APC/C during anaphase and telophase. The APC/C remains active in degrading substrates to ensure that positive regulators of the cell cycle do not accumulate prematurely. At the G1/S transition FZR1 is phosphorylated, leading to its dissociation from the APC/C. Following DNA damage, it is required for the G2 DNA damage checkpoint: its dephosphorylation and reassociation with the APC/C leads to the ubiquitination of PLK1, preventing entry into mitosis. Acts as an adapter for APC/C to target the DNA-end resection factor RBBP8/CtIP for ubiquitination and subsequent proteasomal degradation. Through the regulation of RBBP8/CtIP protein turnover, may play a role in DNA damage response, favoring DNA double-strand repair through error-prone non-homologous end joining (NHEJ) over error-free, RBBP8-mediated homologous recombination (HR). In Homo sapiens (Human), this protein is Fizzy-related protein homolog.